Here is a 301-residue protein sequence, read N- to C-terminus: MKIAVLSRNPRLYSTRRLVEAGTERGHEMVVVDTLRAYMNIASHKPQIHYRGKPLEGFDAVIPRIGASVTFYGCAVLRQFEMMGVFPLNESVAIARSRDKLRSLQLLSRRGIGLPVTGFAHSPDDIPDLIEMVNGAPLVIKVLEGTQGIGVVLCETATAAESVIEAFMGLKQNIMVQEYIKEAGGADIRCFVVGDKVIAAMKRQAKPGEFRSNLHRGGSASLIKITPEERMTALRAAKVMGLSVAGVDILRSNHGPLVMEVNSSPGLEGIETTTGKNVAGIIIEHIEKNGGPNMTRTKGKG.

An ATP-grasp domain is found at 104–287 (LQLLSRRGIG…VAGIIIEHIE (184 aa)). ATP is bound by residues K141, 178 to 179 (EY), D187, and 211 to 213 (RSN). Mg(2+)-binding residues include D248, E260, and N262. D248, E260, and N262 together coordinate Mn(2+).

Belongs to the RimK family. The cofactor is Mg(2+). It depends on Mn(2+) as a cofactor.

This Pseudomonas fluorescens (strain ATCC BAA-477 / NRRL B-23932 / Pf-5) protein is Probable alpha-L-glutamate ligase.